The primary structure comprises 228 residues: RING1 and YY1-binding protein (228 aa).

Disordered stretches follow at residues 1 to 21, 47 to 157, and 172 to 228; these read MTMG…PAAD, RKGT…STAQ, and DFKE…DESF. Residues 21–50 form a RanBP2-type zinc finger; the sequence is DEGFWDCSVCTFRNSAEAFKCSICDVRKGT. Residues 76 to 98 show a composition bias toward basic and acidic residues; sequence PKKEKKEKVEKPDKEKPEKDKDI. Residue Lys77 forms a Glycyl lysine isopeptide (Lys-Gly) (interchain with G-Cter in SUMO2) linkage. A Phosphoserine modification is found at Ser99. The segment covering 113–122 has biased composition (basic and acidic residues); the sequence is PKSDILKDPP. Phosphoserine occurs at positions 123, 127, and 130. Residues 124 to 143 show a composition bias toward polar residues; that stretch reads EANSIQSANATTKTSETNHT. An interaction with GABPB1 and FANK1 region spans residues 143-226; it reads TSRPRLKNVD…KGDMSAVNDE (84 aa). The segment covering 179 to 204 has biased composition (low complexity); it reads SSSTSSSTVTSSAGSEQQNQSSSGSE. Ser227 is modified (phosphoserine).

Monomer. Component of repressive BCOR complex containing Polycomb group subcomplex at least composed of BCOR, PCGF1, RING1 and RNF2/RING2. Component of PCR1-like complexes. Interacts with PCGF1. Part of a PCR1-like complex that contains AUTS2, PCGF5, RNF2, CSNK2B and RYBP. Interacts with RNF2; the interaction is direct. Interacts with CBX2, YAF2, RING1 and RNF2. Interacts with ubiquitin and ubiquitinated proteins. Interacts with ubiquitinated histone H2A. Interacts with apoptin, DEDD, FADD, CASP8, CASP10, YY1 and GABPB1. Together with GABPB1 and YY1, it forms a ternary complex, probably being the bridge factor between these two transcription factors. Interacts with MDM2, and thereby inhibits ubiquitination of TP53. Identified in a ternary complex containing MDM2, TP53 and RYBP. Interacts with FANK1; may prevent the ubiquitin-mediated proteasomal degradation of FANK1. Interacts with IFT57. Monoubiquitinated. As to expression, expressed in embryonic stem cells.

Its subcellular location is the nucleus. It is found in the cytoplasm. The protein resides in the nucleoplasm. Functionally, component of a Polycomb group (PcG) multiprotein PRC1-like complex, a complex class required to maintain the transcriptionally repressive state of many genes, including Hox genes, throughout development. PcG PRC1-like complex acts via chromatin remodeling and modification of histones; it mediates monoubiquitination of histone H2A 'Lys-119', rendering chromatin heritably changed in its expressibility. Component of a PRC1-like complex that mediates monoubiquitination of histone H2A 'Lys-119' on the X chromosome and is required for normal silencing of one copy of the X chromosome in XX females. May stimulate ubiquitination of histone H2A 'Lys-119' by recruiting the complex to target sites. Inhibits ubiquitination and subsequent degradation of TP53, and thereby plays a role in regulating transcription of TP53 target genes. May also regulate the ubiquitin-mediated proteasomal degradation of other proteins like FANK1 to regulate apoptosis. May be implicated in the regulation of the transcription as a repressor of the transcriptional activity of E4TF1. May bind to DNA. May play a role in the repression of tumor growth and metastasis in breast cancer by down-regulating SRRM3. The polypeptide is RING1 and YY1-binding protein (Rybp) (Mus musculus (Mouse)).